A 306-amino-acid polypeptide reads, in one-letter code: ATP synthase gamma chain (306 aa).

Belongs to the ATPase gamma chain family. As to quaternary structure, F-type ATPases have 2 components, CF(1) - the catalytic core - and CF(0) - the membrane proton channel. CF(1) has five subunits: alpha(3), beta(3), gamma(1), delta(1), epsilon(1). CF(0) has three main subunits: a, b and c.

It is found in the cell membrane. Functionally, produces ATP from ADP in the presence of a proton gradient across the membrane. The gamma chain is believed to be important in regulating ATPase activity and the flow of protons through the CF(0) complex. The polypeptide is ATP synthase gamma chain (Bifidobacterium adolescentis (strain ATCC 15703 / DSM 20083 / NCTC 11814 / E194a)).